The primary structure comprises 596 residues: uncharacterized protein (596 aa).

Residues 7 to 26 form a helical membrane-spanning segment; the sequence is FWPILLGFTVLVAAGLYYVV.

The protein resides in the membrane. This is an uncharacterized protein from Sinorhizobium fredii (strain NBRC 101917 / NGR234).